Here is a 265-residue protein sequence, read N- to C-terminus: Indole-3-glycerol phosphate synthase (265 aa).

Belongs to the TrpC family.

It catalyses the reaction 1-(2-carboxyphenylamino)-1-deoxy-D-ribulose 5-phosphate + H(+) = (1S,2R)-1-C-(indol-3-yl)glycerol 3-phosphate + CO2 + H2O. Its pathway is amino-acid biosynthesis; L-tryptophan biosynthesis; L-tryptophan from chorismate: step 4/5. This Chromobacterium violaceum (strain ATCC 12472 / DSM 30191 / JCM 1249 / CCUG 213 / NBRC 12614 / NCIMB 9131 / NCTC 9757 / MK) protein is Indole-3-glycerol phosphate synthase.